The chain runs to 259 residues: 3-dehydroquinate dehydratase (259 aa).

3-dehydroquinate contacts are provided by residues glutamate 50–arginine 52 and arginine 86. The Proton donor/acceptor role is filled by histidine 147. The Schiff-base intermediate with substrate role is filled by lysine 174. 3-dehydroquinate contacts are provided by arginine 216, serine 235, and glutamine 239.

It belongs to the type-I 3-dehydroquinase family. In terms of assembly, homodimer.

It carries out the reaction 3-dehydroquinate = 3-dehydroshikimate + H2O. It participates in metabolic intermediate biosynthesis; chorismate biosynthesis; chorismate from D-erythrose 4-phosphate and phosphoenolpyruvate: step 3/7. Involved in the third step of the chorismate pathway, which leads to the biosynthesis of aromatic amino acids. Catalyzes the cis-dehydration of 3-dehydroquinate (DHQ) and introduces the first double bond of the aromatic ring to yield 3-dehydroshikimate. This chain is 3-dehydroquinate dehydratase, found in Geobacillus sp. (strain WCH70).